The chain runs to 63 residues: Large ribosomal subunit protein uL29 (63 aa).

This sequence belongs to the universal ribosomal protein uL29 family.

This chain is Large ribosomal subunit protein uL29, found in Aliivibrio fischeri (strain ATCC 700601 / ES114) (Vibrio fischeri).